A 439-amino-acid polypeptide reads, in one-letter code: MNLTHTQLAEHGYMSGFANEFATEALPGALPVGQNSPQRAPYGLYAEQLSGTAFTAPRAHNRRSWLYRIRPGAVHKPFTLVEQSRFLSRFDEVPPSPNQMRWSPPAMPTTPTDFIDGIVTMAGNGGPDAMTGCGIHLYLANQSMQDRFFYNADGEMLIVPQQGRVRFVTEMGRLDVEPQEIVVIPRGVRFRVELPDGEARGYICENYGALFKLPDLGVIGSNGLANPRDFMTPVAAYEDREGDFELVAKFQGNLWRADIGHSPLDVVAWHGNFAPYKYDLRRFNTIGSISFDHPDPSIFLVLQSPSDTPGVDTIDFVIFGPRWLAMENSFRPPWFHRNIASEFMGLITGVYDAKADGFAPGGASLHNCMSGHGPDADTFAKATSADTSTPHHITDTMAFMFETPGVIRPTPYAARSASLQQDYYTCWQGLKKHFNPNVR.

His293 functions as the Proton acceptor in the catalytic mechanism. Fe cation-binding residues include His336 and Glu342. Homogentisate-binding residues include Tyr351 and His372. His372 lines the Fe cation pocket.

The protein belongs to the homogentisate dioxygenase family. As to quaternary structure, hexamer; dimer of trimers. It depends on Fe cation as a cofactor.

It carries out the reaction homogentisate + O2 = 4-maleylacetoacetate + H(+). It functions in the pathway amino-acid degradation; L-phenylalanine degradation; acetoacetate and fumarate from L-phenylalanine: step 4/6. Functionally, involved in the catabolism of homogentisate (2,5-dihydroxyphenylacetate or 2,5-OH-PhAc), a central intermediate in the degradation of phenylalanine and tyrosine. Catalyzes the oxidative ring cleavage of the aromatic ring of homogentisate to yield maleylacetoacetate. The sequence is that of Homogentisate 1,2-dioxygenase from Cupriavidus pinatubonensis (strain JMP 134 / LMG 1197) (Cupriavidus necator (strain JMP 134)).